The following is a 178-amino-acid chain: Large ribosomal subunit protein uL10 (178 aa).

Belongs to the universal ribosomal protein uL10 family. Part of the ribosomal stalk of the 50S ribosomal subunit. The N-terminus interacts with L11 and the large rRNA to form the base of the stalk. The C-terminus forms an elongated spine to which L12 dimers bind in a sequential fashion forming a multimeric L10(L12)X complex.

Functionally, forms part of the ribosomal stalk, playing a central role in the interaction of the ribosome with GTP-bound translation factors. The protein is Large ribosomal subunit protein uL10 of Gloeothece citriformis (strain PCC 7424) (Cyanothece sp. (strain PCC 7424)).